A 273-amino-acid polypeptide reads, in one-letter code: Thymidylate synthase (273 aa).

Arginine 31 provides a ligand contact to dUMP. Histidine 61 provides a ligand contact to (6R)-5,10-methylene-5,6,7,8-tetrahydrofolate. 136 to 137 (RR) lines the dUMP pocket. Cysteine 156 acts as the Nucleophile in catalysis. DUMP contacts are provided by residues 176–179 (RSAD), asparagine 187, and 217–219 (HIY). Aspartate 179 is a binding site for (6R)-5,10-methylene-5,6,7,8-tetrahydrofolate. Position 272 (alanine 272) interacts with (6R)-5,10-methylene-5,6,7,8-tetrahydrofolate.

Belongs to the thymidylate synthase family. Bacterial-type ThyA subfamily. As to quaternary structure, homodimer.

The protein resides in the cytoplasm. It catalyses the reaction dUMP + (6R)-5,10-methylene-5,6,7,8-tetrahydrofolate = 7,8-dihydrofolate + dTMP. It functions in the pathway pyrimidine metabolism; dTTP biosynthesis. Functionally, catalyzes the reductive methylation of 2'-deoxyuridine-5'-monophosphate (dUMP) to 2'-deoxythymidine-5'-monophosphate (dTMP) while utilizing 5,10-methylenetetrahydrofolate (mTHF) as the methyl donor and reductant in the reaction, yielding dihydrofolate (DHF) as a by-product. This enzymatic reaction provides an intracellular de novo source of dTMP, an essential precursor for DNA biosynthesis. The protein is Thymidylate synthase of Corynebacterium jeikeium (strain K411).